A 381-amino-acid chain; its full sequence is Guanine nucleotide-binding protein G(olf) subunit alpha (381 aa).

The disordered stretch occupies residues M1–N25. A lipid anchor (N-palmitoyl glycine) is attached at G2. C3 is lipidated: S-palmitoyl cysteine. Positions T10 to N25 are enriched in basic and acidic residues. The region spanning A41–L381 is the G-alpha domain. Residues R44–T57 form a G1 motif region. GTP is bound by residues E52, S53, G54, K55, S56, and T57. A Mg(2+)-binding site is contributed by S56. T178 carries the post-translational modification Phosphothreonine. The segment at D183 to T191 is G2 motif. GTP contacts are provided by L185, R186, and T191. Positions 191 and 210 each coordinate Mg(2+). Positions F206–R215 are G3 motif. Positions 213, 279, 280, 282, and 353 each coordinate GTP. The tract at residues I275–D282 is G4 motif. The G5 motif stretch occupies residues T351–T356.

The protein belongs to the G-alpha family. G(s) subfamily. As to quaternary structure, g proteins are composed of 3 units; alpha, beta and gamma. The alpha chain contains the guanine nucleotide binding site. Interacts with GAS2L2. Interacts (GDP-bound form) with RIC8B (via C-terminus); promoting GNAL folding and association with the plasma membrane.

The protein resides in the cell membrane. The enzyme catalyses GTP + H2O = GDP + phosphate + H(+). In terms of biological role, guanine nucleotide-binding protein (G protein) involved as transducer in olfactory signal transduction controlled by G protein-coupled receptors (GPCRs). Contains the guanine nucleotide binding site and alternates between an active, GTP-bound state and an inactive, GDP-bound state. Signaling by an activated GPCR promotes GDP release and GTP binding. The alpha subunit has a low GTPase activity that converts bound GTP to GDP, thereby terminating the signal. Both GDP release and GTP hydrolysis are modulated by numerous regulatory proteins. GNAL/G(olf) alpha specifically mediates olfactory signal transduction within the olfactory neuroepithelium and the basal ganglia following GPCRs activation. Acts by promoting the specific activation of adenylyl cyclase ADCY3, resulting in increased levels of the signaling molecule cAMP. In Rattus norvegicus (Rat), this protein is Guanine nucleotide-binding protein G(olf) subunit alpha.